The chain runs to 465 residues: Ubiquitin carboxyl-terminal hydrolase UCH54 (465 aa).

The UCH catalytic domain maps to 11–333 (EWCLIESNPC…VRFNIIAVMK (323 aa)). Catalysis depends on cysteine 145, which acts as the Nucleophile. Catalysis depends on histidine 220, which acts as the Proton donor. A disordered region spans residues 244–293 (INADEQNKPNPNNNNNNKDNDNDNNNNNNNNNNNNNNNNNNNNNNNNNNI). The span at 251–292 (KPNPNNNNNNKDNDNDNNNNNNNNNNNNNNNNNNNNNNNNNN) shows a compositional bias: low complexity. The region spanning 432 to 460 (NFYPFIMSSLNLMAKHKLLKDAYQKEKLK) is the ULD domain.

Belongs to the peptidase C12 family.

The enzyme catalyses Thiol-dependent hydrolysis of ester, thioester, amide, peptide and isopeptide bonds formed by the C-terminal Gly of ubiquitin (a 76-residue protein attached to proteins as an intracellular targeting signal).. Functionally, thiol protease that recognizes and hydrolyzes a peptide bond at the C-terminal glycine of either ubiquitin or NEDD8. This Plasmodium falciparum (isolate 3D7) protein is Ubiquitin carboxyl-terminal hydrolase UCH54.